Consider the following 165-residue polypeptide: DNA mimic protein DMP19 (165 aa).

Belongs to the DMP19-like protein family. As to quaternary structure, monomer. Homodimer. The monomeric form of DMP19 interacts with the DNA-binding protein HU homodimer with 1:1 stoichiometry. The dimeric form of DMP19 interacts with the Neisseria hypothetical transcription factor (NHTF) dimer.

Activity can be modulated in vitro by crown ethers, which are small cyclic polyethers that can modify protein surface behavior dramatically by stabilizing either intra- or intermolecular interactions, thereby probably altering the protein's tertiary and quaternary structure. Its function is as follows. Acts as a DNA mimic. Interacts with DNA-binding proteins and prevents their binding to DNA by occupying the DNA binding sites on the proteins, acting as a competitive inhibitor. DMP19 is a bifunctional DNA mimic protein involved in controlling nucleoid formation as well as gene regulation. This bifunctionality depends on different oligomeric states. The monomeric form interacts with the DNA-binding protein HU, which prevents HU from binding to DNA and forming nucleoids. The dimeric form interacts with the Neisseria hypothetical transcription factor (NHTF) and prevents NHTF from binding to its DNA-binding sites, thereby blocking its repressor activity and influencing expression of the target genes. DMP19 might use these different oligomerizations to regulate genes in two steps: the monomeric form may first release selected gene regions in chromosomal DNA by preventing HU from binding to DNA and forming nucleoids, then the dimeric form blocks the gene repressor activity of NHTF and ensures the continued expression of NHTF-controlled genes. The polypeptide is DNA mimic protein DMP19 (Neisseria meningitidis serogroup B (strain ATCC BAA-335 / MC58)).